Reading from the N-terminus, the 208-residue chain is Ciliary-associated calcium-binding coiled-coil protein 1 (208 aa).

As to expression, testis-specific. Expressed in spermatocytes and round spermatids (at protein level).

It is found in the cytoplasm. Its subcellular location is the cytoskeleton. The protein resides in the microtubule organizing center. The protein localises to the centrosome. It localises to the cell projection. It is found in the cilium. Its subcellular location is the flagellum. Functionally, calcium-binding protein. May be involved in the control of sperm flagellar movement. The polypeptide is Ciliary-associated calcium-binding coiled-coil protein 1 (Mus musculus (Mouse)).